The following is a 219-amino-acid chain: Glycerol-3-phosphate acyltransferase 2 (219 aa).

5 helical membrane-spanning segments follow: residues 1–21 (MVFW…GSTP), 55–75 (WPAL…VVFA), 93–113 (ALDL…AVLL), 135–155 (VLLA…GVAL), and 160–180 (IVSL…CGLE).

Belongs to the PlsY family. Probably interacts with PlsX.

The protein resides in the cell inner membrane. The catalysed reaction is an acyl phosphate + sn-glycerol 3-phosphate = a 1-acyl-sn-glycero-3-phosphate + phosphate. It participates in lipid metabolism; phospholipid metabolism. Catalyzes the transfer of an acyl group from acyl-phosphate (acyl-PO(4)) to glycerol-3-phosphate (G3P) to form lysophosphatidic acid (LPA). This enzyme utilizes acyl-phosphate as fatty acyl donor, but not acyl-CoA or acyl-ACP. In Rhizobium johnstonii (strain DSM 114642 / LMG 32736 / 3841) (Rhizobium leguminosarum bv. viciae), this protein is Glycerol-3-phosphate acyltransferase 2.